A 305-amino-acid chain; its full sequence is Ribosomal RNA small subunit methyltransferase H (305 aa).

Residues 30–32, Asp49, Phe74, Asp96, and Gln103 contribute to the S-adenosyl-L-methionine site; that span reads GGH.

The protein belongs to the methyltransferase superfamily. RsmH family.

The protein resides in the cytoplasm. The catalysed reaction is cytidine(1402) in 16S rRNA + S-adenosyl-L-methionine = N(4)-methylcytidine(1402) in 16S rRNA + S-adenosyl-L-homocysteine + H(+). Its function is as follows. Specifically methylates the N4 position of cytidine in position 1402 (C1402) of 16S rRNA. In Francisella tularensis subsp. tularensis (strain FSC 198), this protein is Ribosomal RNA small subunit methyltransferase H.